The sequence spans 2475 residues: Non-reducing polyketide synthase prhL (2475 aa).

The segment at 14-253 (VLFGSKYSEI…HHADHLSAAQ (240 aa)) is N-terminal acylcarrier protein transacylase domain (SAT). One can recognise a Ketosynthase family 3 (KS3) domain in the interval 384-800 (SIPIAVTGLA…GSNAAIVLKE (417 aa)). Catalysis depends on for beta-ketoacyl synthase activity residues C549, H684, and H723. The tract at residues 910–1212 (LCFGGQTGNK…CPMDLSGPQA (303 aa)) is malonyl-CoA:ACP transacylase (MAT) domain. The active-site For acyl/malonyl transferase activity is the S997. The segment at 1279-1407 (EGLKLVQLLK…GTISLSPGAN (129 aa)) is N-terminal hotdog fold. The 308-residue stretch at 1279–1586 (EGLKLVQLLK…FTSVSIQSLR (308 aa)) folds into the PKS/mFAS DH domain. The tract at residues 1282-1585 (KLVQLLKNEG…TFTSVSIQSL (304 aa)) is product template (PT) domain. H1312 functions as the Proton acceptor; for dehydratase activity in the catalytic mechanism. The interval 1435–1586 (SSSGLKRSTV…FTSVSIQSLR (152 aa)) is C-terminal hotdog fold. The active-site Proton donor; for dehydratase activity is the D1493. The Carrier domain maps to 1626–1703 (SSNGDDLRTV…ALVQRIFPGR (78 aa)). S1663 carries the post-translational modification O-(pantetheine 4'-phosphoryl)serine. A methyltransferase (CMeT) domain region spans residues 1865–2098 (HHTSEHKLLH…GFNWVDWTDN (234 aa)). The segment at 2127-2475 (SDIHEETVVY…YEFLRSHVRL (349 aa)) is thioesterase (TE) domain. Catalysis depends on for thioesterase activity residues S2250 and D2412.

The enzyme catalyses 3 malonyl-CoA + acetyl-CoA + 2 S-adenosyl-L-methionine = 3,5-dimethylorsellinate + 2 S-adenosyl-L-homocysteine + 3 CO2 + 4 CoA. Its pathway is secondary metabolite biosynthesis; terpenoid biosynthesis. Non-reducing polyketide synthase; part of the gene cluster that mediates the biosynthesis of paraherquonin, a meroterpenoid with a unique, highly congested hexacyclic molecular architecture. The first step of the pathway is the synthesis of 3,5-dimethylorsellinic acid (DMOA) by the polyketide synthase prhL. Synthesis of DMOA is followed by farnesylation by the prenyltransferase prhE, methylesterification by the methyl-transferase prhM, epoxidation of the prenyl chain by the flavin-dependent monooxygenase prhF, and cyclization of the farnesyl moiety by the terpene cyclase prhH, to yield the tetracyclic intermediate, protoaustinoid A. The short chain dehydrogenase prhI then oxidizes the C-3 alcohol group of the terpene cyclase product to transform protoaustinoid A into protoaustinoid B. The FAD-binding monooxygenase prhJ catalyzes the oxidation of protoaustinoid B into preaustinoid A which is further oxidized into preaustinoid A1 by FAD-binding monooxygenase phrK. Finally, prhA leads to berkeleydione via the berkeleyone B intermediate. PrhA is a multifunctional dioxygenase that first desaturates at C5-C6 to form berkeleyone B, followed by rearrangement of the A/B-ring to form the cycloheptadiene moiety in berkeleydione. Berkeleydione serves as the key intermediate for the biosynthesis of paraherquonin as well as many other meroterpenoids. The cytochrome P450 monooxygenases prhB, prhD, and prhN, as well as the isomerase prhC, are probably involved in the late stage of paraherquonin biosynthesis, after the production of berkeleydione. Especially prhC might be a multifunctional enzyme that catalyzes the D-ring expansion via intramolecular methoxy rearrangement, as well as the hydrolysis of the expanded D-ring. In Penicillium brasilianum, this protein is Non-reducing polyketide synthase prhL.